A 490-amino-acid chain; its full sequence is ATP synthase subunit beta, chloroplastic (490 aa).

170-177 (GGAGVGKT) provides a ligand contact to ATP.

The protein belongs to the ATPase alpha/beta chains family. In terms of assembly, F-type ATPases have 2 components, CF(1) - the catalytic core - and CF(0) - the membrane proton channel. CF(1) has five subunits: alpha(3), beta(3), gamma(1), delta(1), epsilon(1). CF(0) has four main subunits: a(1), b(1), b'(1) and c(9-12).

It localises to the plastid. Its subcellular location is the chloroplast thylakoid membrane. It carries out the reaction ATP + H2O + 4 H(+)(in) = ADP + phosphate + 5 H(+)(out). In terms of biological role, produces ATP from ADP in the presence of a proton gradient across the membrane. The catalytic sites are hosted primarily by the beta subunits. The protein is ATP synthase subunit beta, chloroplastic of Ipomoea wrightii (Wright's morning glory).